Here is a 316-residue protein sequence, read N- to C-terminus: CXXC-type zinc finger protein 5 (316 aa).

Over residues 1–10 (MSSLGGGSQD) the composition is skewed to gly residues. Residues 1–95 (MSSLGGGSQD…SGGAGSMMGG (95 aa)) are disordered. Composition is skewed to low complexity over residues 11–27 (AGGS…SGSG) and 36–50 (SATV…VADD). The segment at 250–291 (GKKKRKRCGMCAPCRRRINCEQCSSCRNRKTGHQICKFRKCE) adopts a CXXC-type zinc-finger fold. The short motif at 251 to 256 (KKKRKR) is the Nuclear localization signal element. C257, C260, C263, C269, C272, C275, C285, and C290 together coordinate Zn(2+).

In terms of assembly, interacts with DVL1. Interacts with RBPJ. Expressed in neural stem cells (at protein level). Expressed in the dorsal telencephalon.

It localises to the nucleus. Its subcellular location is the cytoplasm. Functionally, may indirectly participate in activation of the NF-kappa-B and MAPK pathways. Required for DNA damage-induced ATM phosphorylation, p53 activation and cell cycle arrest. Involved in myelopoiesis. Acts as a mediator of BMP4-mediated modulation of canonical Wnt signaling activity in neural stem cells. Binds to the oxygen responsive element of COX4I2 and represses its transcription under hypoxia conditions (4% oxygen), as well as normoxia conditions (20% oxygen). May repress COX4I2 transactivation induced by CHCHD2 and RBPJ. Binds preferentially to DNA containing cytidine-phosphate-guanosine (CpG) dinucleotides over CpH (H=A, T, and C), hemimethylated-CpG and hemimethylated-hydroxymethyl-CpG. This chain is CXXC-type zinc finger protein 5 (Cxxc5), found in Rattus norvegicus (Rat).